A 324-amino-acid polypeptide reads, in one-letter code: o-succinylbenzoate synthase (324 aa).

The active-site Proton donor is the lysine 135. Residues aspartate 163, glutamate 192, and aspartate 215 each contribute to the Mg(2+) site. The active-site Proton acceptor is lysine 237.

It belongs to the mandelate racemase/muconate lactonizing enzyme family. MenC type 1 subfamily. A divalent metal cation is required as a cofactor.

It carries out the reaction (1R,6R)-6-hydroxy-2-succinyl-cyclohexa-2,4-diene-1-carboxylate = 2-succinylbenzoate + H2O. It functions in the pathway quinol/quinone metabolism; 1,4-dihydroxy-2-naphthoate biosynthesis; 1,4-dihydroxy-2-naphthoate from chorismate: step 4/7. Its pathway is quinol/quinone metabolism; menaquinone biosynthesis. In terms of biological role, converts 2-succinyl-6-hydroxy-2,4-cyclohexadiene-1-carboxylate (SHCHC) to 2-succinylbenzoate (OSB). This chain is o-succinylbenzoate synthase, found in Aliivibrio fischeri (strain ATCC 700601 / ES114) (Vibrio fischeri).